The following is a 98-amino-acid chain: MKYTNYDIIRRPVITEKSMGAMNEKKYTFIVDIRANKSMIKRAIEDVFGVTVETVNTSRYKGKKKRVGVHIGKRPDYKKAIVKLTEESKTIEFFEGIQ.

Belongs to the universal ribosomal protein uL23 family. In terms of assembly, part of the 50S ribosomal subunit. Contacts protein L29, and trigger factor when it is bound to the ribosome.

Functionally, one of the early assembly proteins it binds 23S rRNA. One of the proteins that surrounds the polypeptide exit tunnel on the outside of the ribosome. Forms the main docking site for trigger factor binding to the ribosome. This is Large ribosomal subunit protein uL23 from Clostridium kluyveri (strain NBRC 12016).